The chain runs to 285 residues: Inositol oxygenase (285 aa).

Residue Arg29 coordinates substrate. Ser33 is modified (phosphoserine). Residue 85-87 participates in substrate binding; it reads DES. Fe cation contacts are provided by His98, His123, and Asp124. Residues Lys127 and 141–142 each bind substrate; that span reads GD. 3 residues coordinate Fe cation: His194, His220, and Asp253. 220–221 provides a ligand contact to substrate; the sequence is HS.

Belongs to the myo-inositol oxygenase family. Requires Fe cation as cofactor.

It localises to the cytoplasm. The catalysed reaction is myo-inositol + O2 = D-glucuronate + H2O + H(+). It participates in polyol metabolism; myo-inositol degradation into D-glucuronate; D-glucuronate from myo-inositol: step 1/1. This is Inositol oxygenase (MIOX) from Pongo abelii (Sumatran orangutan).